Reading from the N-terminus, the 84-residue chain is Putative membrane protein insertion efficiency factor (84 aa).

Residues 63-84 (WGGSGYDPVPGADPEHDRRPRG) form a disordered region. A compositionally biased stretch (basic and acidic residues) spans 75 to 84 (DPEHDRRPRG).

It belongs to the UPF0161 family.

It is found in the cell inner membrane. In terms of biological role, could be involved in insertion of integral membrane proteins into the membrane. In Cereibacter sphaeroides (strain ATCC 17029 / ATH 2.4.9) (Rhodobacter sphaeroides), this protein is Putative membrane protein insertion efficiency factor.